Here is a 1031-residue protein sequence, read N- to C-terminus: Sodium/potassium-transporting ATPase subunit alpha (1031 aa).

Residues 1–33 form a disordered region; sequence MADPGDLESRGKADSYSVAEKKSAPKKISKKNA. Basic and acidic residues predominate over residues 7–23; it reads LESRGKADSYSVAEKKS. Positions 24-33 are enriched in basic residues; it reads APKKISKKNA. 4 helical membrane passes run 102 to 123, 136 to 155, 297 to 319, and 326 to 354; these read MFGG…AFGI, LYLG…FSYY, FIHI…SLAM, and AIIF…TLTA. The active-site 4-aspartylphosphate intermediate is Asp-382. Lys-512 lines the ATP pocket. Residues Asp-725 and Asp-729 each coordinate Mg(2+). Transmembrane regions (helical) follow at residues 795–818, 857–882, 924–944, and 961–986; these read ISPF…ILCI, LISL…IILA, LTCQ…DLII, and FLNF…NTGL.

The protein belongs to the cation transport ATPase (P-type) (TC 3.A.3) family. Type IIC subfamily. The sodium/potassium-transporting ATPase is composed of a catalytic alpha subunit, an auxiliary non-catalytic beta subunit and an additional regulatory subunit.

The protein resides in the cell membrane. It carries out the reaction K(+)(out) + Na(+)(in) + ATP + H2O = K(+)(in) + Na(+)(out) + ADP + phosphate + H(+). Its activity is regulated as follows. This alpha subunit is resistant to ouabain. Functionally, this is the catalytic component of the active enzyme, which catalyzes the hydrolysis of ATP coupled with the exchange of sodium and potassium ions across the plasma membrane. This action creates the electrochemical gradient of sodium and potassium ions, providing the energy for active transport of various nutrients. The chain is Sodium/potassium-transporting ATPase subunit alpha from Hydra vulgaris (Hydra).